Consider the following 1836-residue polypeptide: Sodium channel protein type 4 subunit alpha (1836 aa).

Topologically, residues 1–131 (MARPSLCTLV…RGAIKVLIHA (131 aa)) are cytoplasmic. Basic and acidic residues predominate over residues 39-60 (LQRNKQMEIEEPERKPRSDLEA). The interval 39-63 (LQRNKQMEIEEPERKPRSDLEAGKN) is disordered. Residues 113–454 (LLSPFSVVRR…VVAMAYAEQN (342 aa)) form an I repeat. The helical transmembrane segment at 132 to 150 (LFSMFIMITILTNCVFMTM) threads the bilayer. The Extracellular portion of the chain corresponds to 151–157 (SDPPPWS). The chain crosses the membrane as a helical span at residues 158–178 (KNVEYTFTGIYTFESLIKILA). Residues 179–192 (RGFCVDDFTFLRDP) lie on the Cytoplasmic side of the membrane. The chain crosses the membrane as a helical span at residues 193–210 (WNWLDFSVIMMAYLTEFV). The Extracellular segment spans residues 211-216 (DLGNIS). N-linked (GlcNAc...) asparagine glycosylation is present at asparagine 214. The chain crosses the membrane as a helical span at residues 217-233 (ALRTFRVLRALKTITVI). Topologically, residues 234–252 (PGLKTIVGALIQSVKKLSD) are cytoplasmic. A helical transmembrane segment spans residues 253–272 (VMILTVFCLSVFALVGLQLF). The Extracellular segment spans residues 273 to 391 (MGNLRQKCVR…PNYGYTSYDT (119 aa)). Cysteines 280 and 360 form a disulfide. Asparagine 288, asparagine 291, asparagine 297, asparagine 303, asparagine 315, asparagine 321, asparagine 333, and asparagine 362 each carry an N-linked (GlcNAc...) asparagine glycan. A disulfide bond links cysteine 369 and cysteine 375. Positions 392-416 (FSWAFLALFRLMTQDYWENLFQLTL) form an intramembrane region, pore-forming. Topologically, residues 417–423 (RAAGKTY) are extracellular. The helical transmembrane segment at 424 to 444 (MIFFVVIIFLGSFYLINLILA) threads the bilayer. The Cytoplasmic portion of the chain corresponds to 445–578 (VVAMAYAEQN…NIIHLIVMDP (134 aa)). The disordered stretch occupies residues 493–530 (GGEADGDPAHGKDCNGSLDTSQGEKGAPRQSSSGDSGI). The span at 509–528 (SLDTSQGEKGAPRQSSSGDS) shows a compositional bias: polar residues. An II repeat occupies 560–832 (CCAPWLKFKN…QIAIGRIKLG (273 aa)). The helical transmembrane segment at 579-597 (FVDLGITICIVLNTLFMAM) threads the bilayer. The Extracellular segment spans residues 598–608 (EHYPMTEHFDN). A helical membrane pass occupies residues 609 to 628 (VLTVGNLVFTGIFTAEMVLK). The Cytoplasmic portion of the chain corresponds to 629-642 (LIAMDPYEYFQQGW). The helical transmembrane segment at 643–662 (NIFDSIIVTLSLVELGLANV) threads the bilayer. At 663–664 (QG) the chain is on the extracellular side. The chain crosses the membrane as a helical span at residues 665-682 (LSVLRSFRLLRVFKLAKS). Residues 683–698 (WPTLNMLIKIIGNSVG) lie on the Cytoplasmic side of the membrane. The helical transmembrane segment at 699–717 (ALGNLTLVLAIIVFIFAVV) threads the bilayer. At 718–746 (GMQLFGKSYKECVCKIALDCNLPRWHMHD) the chain is on the extracellular side. Cysteine 731 and cysteine 737 are oxidised to a cystine. Residues 747–767 (FFHSFLIVFRILCGEWIETMW) constitute an intramembrane region (pore-forming). Over 768–778 (DCMEVAGQAMC) the chain is Extracellular. An intrachain disulfide couples cysteine 769 to cysteine 778. The helical transmembrane segment at 779-797 (LTVFLMVMVIGNLVVLNLF) threads the bilayer. Residues 798–1032 (LALLLSSFSA…ACFKIVEHNW (235 aa)) are Cytoplasmic-facing. Disordered regions lie at residues 863-885 (GAGE…PPEE) and 930-992 (ESDL…QPEE). Basic and acidic residues predominate over residues 876-885 (EDEKKEPPEE). Acidic residues-rich tracts occupy residues 930–947 (ESDL…FSEP) and 975–992 (EDPE…QPEE). Residues 1013–1326 (RGKKWWTLRR…KKYYNAMKKL (314 aa)) form an III repeat. A helical membrane pass occupies residues 1033–1050 (FETFIVFMILLSSGALAF). At 1051–1063 (EDIYIEQRRVIRT) the chain is on the extracellular side. The helical transmembrane segment at 1064 to 1082 (ILEYADKVFTYIFIMEMLL) threads the bilayer. Over 1083–1096 (KWVAYGFKVYFTNA) the chain is Cytoplasmic. The helical transmembrane segment at 1097–1115 (WCWLDFLIVDVSIISLVAN) threads the bilayer. Residues 1116 to 1123 (WLGYSELG) are Extracellular-facing. Residues 1124 to 1142 (PIKSLRTLRALRPLRALSR) form a helical membrane-spanning segment. Residues 1143–1159 (FEGMRVVVNALLGAIPS) are Cytoplasmic-facing. A helical membrane pass occupies residues 1160 to 1179 (IMNVLLVCLIFWLIFSIMGV). Topologically, residues 1180–1230 (NLFAGKFYYCINTTTSERFDISEVNNKSECESLMHTGQVRWLNVKVNYDNV) are extracellular. Residues cysteine 1189 and cysteine 1209 are joined by a disulfide bond. N-linked (GlcNAc...) asparagine glycosylation is found at asparagine 1191 and asparagine 1205. An intramembrane region (pore-forming) is located at residues 1231–1252 (GLGYLSLLQVATFKGWMDIMYA). Residues 1253–1269 (AVDSREKEEQPQYEVNL) are Extracellular-facing. A helical transmembrane segment spans residues 1270–1291 (YMYLYFVIFIIFGSFFTLNLFI). The Cytoplasmic portion of the chain corresponds to 1292-1354 (GVIIDNFNQQ…MVYDLVTKQA (63 aa)). An important for rapid channel inactivation region spans residues 1310–1312 (IFM). One copy of the IV repeat lies at 1335–1633 (IPRPQNKIQG…WEKFDPDATQ (299 aa)). The chain crosses the membrane as a helical span at residues 1355–1372 (FDITIMILICLNMVTMMV). Residues 1373–1383 (ETDNQSQLKVD) lie on the Extracellular side of the membrane. Residues 1384 to 1402 (ILYNINMIFIIIFTGECVL) traverse the membrane as a helical segment. The Cytoplasmic portion of the chain corresponds to 1403–1414 (KMLALRQYYFTV). A helical transmembrane segment spans residues 1415–1432 (GWNIFDFVVVILSIVGLA). Over 1433-1445 (LSDLIQKYFVSPT) the chain is Extracellular. Residues 1446 to 1462 (LFRVIRLARIGRVLRLI) traverse the membrane as a helical segment. Topologically, residues 1463–1481 (RGAKGIRTLLFALMMSLPA) are cytoplasmic. The helical transmembrane segment at 1482-1499 (LFNIGLLLFLVMFIYSIF) threads the bilayer. The Extracellular segment spans residues 1500–1521 (GMSNFAYVKKESGIDDMFNFET). Residues 1522-1544 (FGNSIICLFEITTSAGWDGLLNP) constitute an intramembrane region (pore-forming). At 1545–1574 (ILNSGPPDCDPNLENPGTSVKGDCGNPSIG) the chain is on the extracellular side. A disulfide bridge connects residues cysteine 1553 and cysteine 1568. The chain crosses the membrane as a helical span at residues 1575–1597 (ICFFCSYIIISFLIVVNMYIAII). Residues 1598–1836 (LENFNVATEE…VRPGVKESLV (239 aa)) lie on the Cytoplasmic side of the membrane. One can recognise an IQ domain in the interval 1727–1756 (EEVCAIKIQRAYRRHLLQRSMKQASYMYRH). The disordered stretch occupies residues 1778 to 1836 (KMYGHENGNSSSPSPEEKGEAGDAGPTMGLMPISPSDTAWPPAPPPGQTVRPGVKESLV).

Belongs to the sodium channel (TC 1.A.1.10) family. Nav1.4/SCN4A subfamily. The Nav1.4 voltage-gated sodium channel consists of an ion-conducting alpha subunit SCN4A which is functional on its own and a regulatory beta subunit SCN1B. SCN1B strongly enhances the presence of SCN4A at the cell surface. SCN1B is also required for rapid channel inactivation and recovery after inactivation. It prevents the decrease of channel activity in response to repetitive, high-frequency depolarizations. Interacts with the syntrophins SNTA1, SNTB1 and SNTB2 (via PDZ domain); probably links SCN4A to the actin cytoskeleton and the extracellular matrix via the dystrophin-associated protein complex and regulates its localization in muscle cells. Interacts with TMEM233; probable regulator of the channel.

The protein localises to the cell membrane. It catalyses the reaction Na(+)(in) = Na(+)(out). The channel is inhibited by tetrodotoxin and saxitoxin. Inhibited by the conotoxin GVIIJ. Functionally, pore-forming subunit of Nav1.4, a voltage-gated sodium (Nav) channel that directly mediates the depolarizing phase of action potentials in excitable membranes. Navs, also called VGSCs (voltage-gated sodium channels) or VDSCs (voltage-dependent sodium channels), operate by switching between closed and open conformations depending on the voltage difference across the membrane. In the open conformation they allow Na(+) ions to selectively pass through the pore, along their electrochemical gradient. The influx of Na+ ions provokes membrane depolarization, initiating the propagation of electrical signals throughout cells and tissues. Highly expressed in skeletal muscles, Nav1.4 generates the action potential crucial for muscle contraction. The chain is Sodium channel protein type 4 subunit alpha from Homo sapiens (Human).